The sequence spans 347 residues: tRNA pseudouridine synthase D (347 aa).

The Nucleophile role is filled by Asp81. Residues 158 to 304 (GVPNYFGNQR…MRHDRRAIAL (147 aa)) enclose the TRUD domain.

This sequence belongs to the pseudouridine synthase TruD family.

The catalysed reaction is uridine(13) in tRNA = pseudouridine(13) in tRNA. Its function is as follows. Responsible for synthesis of pseudouridine from uracil-13 in transfer RNAs. This is tRNA pseudouridine synthase D from Vibrio vulnificus (strain YJ016).